A 351-amino-acid polypeptide reads, in one-letter code: LIM/homeobox protein ceh-14 (351 aa).

2 consecutive LIM zinc-binding domains span residues 46-105 (AICS…KFGT) and 105-169 (TKCS…ARDK). A DNA-binding region (homeobox) is located at residues 180–239 (NKRPRTTISAKSLETLKQAYQTSSKPARHVREQLASETGLDMRVVQVWFQNRRAKEKRLK). Residues 238-254 (LKKDAGRRWKSSNRAES) are compositionally biased toward basic and acidic residues. The segment at 238–268 (LKKDAGRRWKSSNRAESDSNSPIESINGQSP) is disordered. Over residues 255-268 (DSNSPIESINGQSP) the composition is skewed to polar residues.

As to quaternary structure, interacts (via LIM zinc-binding domains 1 and 2) with lim-7 (via LID domain). May interact with itself. May interact with homeobox protein ceh-63. In terms of tissue distribution, expressed in the anterior AFDL/R sensory neurons and BDUL/R and ALA interneurons, and in PVT, PVQL/R, DVC, PVNL/R, PVWL/R, PVR, PHCL/R, PHAL/R and PHBL/R cells in the tail region.

It localises to the nucleus. Its function is as follows. Probable transcription factor, modulating expression of helix-loop-helix protein mbr-1 and homeobox protein ceh-63, perhaps acting in concert with ceh-63. Binds to a motif including the sequence 5'-CTAAT-3' in regulatory promoter elements. Confers thermosensory function to neurons. Required for correct AFD-mediated thermotaxis. In concert with homeobox protein ttx-1, perhaps as components in a complex, specifies identity of AFD neurons, acting by synergistically regulating receptor-type guanylyl cyclase gcy-8, gcy-18 and other genes. Involved in postembryonic differentiation of the ALA neuron, and regulation of genes that contribute to behavioral quiescence, a sleep-like behavior mediated by ALA. Regulates its own expression and also that of homeodomain ceh-17, together forming an autoregulatory loop in the ALA neuron. Required for initial pathfinding of the ALA axons, but largely dispensable for axon migration. Involved in regulating postembryonic axon maintenance in the ventral nerve cord, acting in concert with LIM homeobox protein lim-6, via modulation of expression of immunoglobulin domain zig genes in the interneuron PVT. Plays a role in controlling the peptidergic identity of the BDU neurons, regulating expression of flp-10, nlp-1, and nlp-15, thereby modulating the harsh touch response. This is LIM/homeobox protein ceh-14 (ceh-14) from Caenorhabditis elegans.